We begin with the raw amino-acid sequence, 1251 residues long: Insulin receptor substrate 1 (1251 aa).

Phosphoserine is present on S3. Positions 3-137 (SPPESDGFSD…GAGGGGGSCS (135 aa)) are mediates interaction with PHIP. The region spanning 12 to 115 (DVRKVGYLRK…WYQALLQLHN (104 aa)) is the PH domain. S99 is subject to Phosphoserine; by CK2. Residues 160–264 (FKEVWQVILK…EAMRAMSDEF (105 aa)) enclose the IRS-type PTB domain. The interval 262-430 (DEFRPRSKSQ…SDGGFISSDE (169 aa)) is disordered. Residues 269 to 281 (KSQSSSNCSNPIS) are compositionally biased toward low complexity. Position 270 is a phosphoserine (S270). S307 bears the Phosphoserine; by RPS6KB1 mark. S312 carries the post-translational modification Phosphoserine; by IKKB, MAPK8 and RPS6KB1. Phosphoserine occurs at positions 323, 330, 345, and 348. The span at 354–363 (THAHRHRGSA) shows a compositional bias: basic residues. Composition is skewed to low complexity over residues 383 to 404 (SPSATSPVSLSSSSTSGHGSTS) and 412 to 424 (SSASVSGSPSDGG). S419 is modified (phosphoserine). T446 and T453 each carry phosphothreonine. Y465 is modified (phosphotyrosine; by INSR). Residues 465–468 (YICM) carry the YXXM motif 1 motif. The interval 494–513 (YTPGTGLGTSPALAGDEASS) is disordered. At S527 the chain carries Phosphoserine; by RPS6KB1. Positions 551 to 554 (YTEM) match the YXXM motif 2 motif. The span at 594–610 (RRGGHHRPDSSTLHTDD) shows a compositional bias: basic and acidic residues. A disordered region spans residues 594–616 (RRGGHHRPDSSTLHTDDGYMPMS). Y612 is modified (phosphotyrosine; by INSR). Positions 612–615 (YMPM) match the YXXM motif 3 motif. S629 is modified (phosphoserine). Position 632 is a phosphotyrosine; by INSR (Y632). The short motif at 632 to 635 (YMPM) is the YXXM motif 4 element. S636 is subject to Phosphoserine; by RPS6KB1. The residue at position 662 (Y662) is a Phosphotyrosine. The YXXM motif 5 signature appears at 662 to 665 (YMMM). Residues 668–692 (SGGCSPDIGGGPSSSSSSTVPSGSS) form a disordered region. The YXXM motif 6 motif lies at 730 to 733 (YMNM). Disordered regions lie at residues 734-753 (SPVGDSNTSSPSDCYYGPED) and 769-946 (FKHT…EETG). The span at 774 to 783 (RPGEPEEGAR) shows a compositional bias: basic and acidic residues. Phosphoserine; by AMPK and SIK2 is present on S792. Low complexity-rich tracts occupy residues 799-813 (AATADDSSSSTSSDS) and 875-891 (QQQQQQQQQQQQQQQQQ). A Phosphoserine modification is found at S901. At Y905 the chain carries Phosphotyrosine; by INSR. A GRB2-binding region spans residues 905–907 (YVN). Positions 924 to 937 (SRSSPSVRCPSQLQ) are enriched in polar residues. A phosphotyrosine; by INSR mark is found at Y950 and Y998. 3 short sequence motifs (YXXM motif) span residues 950 to 953 (YMKM), 998 to 1001 (YMTM), and 1021 to 1024 (YADM). Disordered regions lie at residues 1091-1124 (NQSAKVIRADPQGCRRRHSSETFSSTPSATRVGN) and 1130-1149 (AGAAIGGSGGSSSSSEDVKR). A phosphoserine mark is found at S1109 and S1110. Over residues 1111 to 1123 (ETFSSTPSATRVG) the composition is skewed to polar residues. Phosphotyrosine; by INSR is present on Y1188. K1195 participates in a covalent cross-link: Glycyl lysine isopeptide (Lys-Gly) (interchain with G-Cter in ubiquitin). The interval 1195–1251 (KDFKQRPQECTPQPQPPPPPPPHQPLGSSESSSTRRSSEDLSAYASISFQKQPEDLQ) is disordered. Residues 1207–1218 (QPQPPPPPPPHQ) show a composition bias toward pro residues. A Phosphotyrosine; by INSR modification is found at Y1238.

As to quaternary structure, interacts with UBTF and PIK3CA. Interacts (via phosphorylated YXXM motifs) with PIK3R1. Interacts with ROCK1 and FER. Interacts (via PH domain) with PHIP. Interacts with GRB2. Interacts with SOCS7. Interacts (via IRS-type PTB domain) with IGF1R and INSR (via the tyrosine-phosphorylated NPXY motif). Interacts with ALK. Interacts with EIF2AK2/PKR. Interacts with GKAP1. Interacts with DGKZ in the absence of insulin; insulin stimulation decreases this interaction. Found in a ternary complex with DGKZ and PIP5K1A in the absence of insulin stimulation. Interacts with SQSTM1; the interaction is disrupted by the presence of tensin TNS2. Interacts with NCK1 (via SH2 domain). Interacts with NCK2 (via SH3 domain). Interacts with SH2B1; this interaction enhances leptin-induced activation of the PI3-kinase pathway. Interacts with DVL2; this interaction promotes the Wnt/beta-catenin signaling pathway. Interacts with JAK1. Serine phosphorylation of IRS1 is a mechanism for insulin resistance. Ser-312 phosphorylation inhibits insulin action through disruption of IRS1 interaction with the insulin receptor. Phosphorylation of Tyr-905 is required for GRB2-binding. Phosphorylated by ALK. Phosphorylated at Ser-270, Ser-307, Ser-636 and Ser-1109 by RPS6KB1; phosphorylation induces accelerated degradation of IRS1. Phosphorylated on tyrosine residues in response to insulin. In skeletal muscles, dephosphorylated on Tyr-612 by TNS2 under anabolic conditions; dephosphorylation results in the proteasomal degradation of IRS1. In terms of processing, ubiquitinated by the Cul7-RING(FBXW8) complex in a mTOR-dependent manner, leading to its degradation: the Cul7-RING(FBXW8) complex recognizes and binds IRS1 previously phosphorylated by S6 kinase (RPS6KB1 or RPS6KB2). Ubiquitinated by TRAF4 through 'Lys-29' linkage; this ubiquitination regulates the interaction of IRS1 with IGFR and IRS1 tyrosine phosphorylation upon IGF1 stimulation. Post-translationally, S-nitrosylation at by BLVRB inhibits its activity.

It localises to the cytoplasm. Its subcellular location is the nucleus. Its function is as follows. Signaling adapter protein that participates in the signal transduction from two prominent receptor tyrosine kinases, insulin receptor/INSR and insulin-like growth factor I receptor/IGF1R. Plays therefore an important role in development, growth, glucose homeostasis as well as lipid metabolism. Upon phosphorylation by the insulin receptor, functions as a signaling scaffold that propagates insulin action through binding to SH2 domain-containing proteins including the p85 regulatory subunit of PI3K, NCK1, NCK2, GRB2 or SHP2. Recruitment of GRB2 leads to the activation of the guanine nucleotide exchange factor SOS1 which in turn triggers the Ras/Raf/MEK/MAPK signaling cascade. Activation of the PI3K/AKT pathway is responsible for most of insulin metabolic effects in the cell, and the Ras/Raf/MEK/MAPK is involved in the regulation of gene expression and in cooperation with the PI3K pathway regulates cell growth and differentiation. Acts a positive regulator of the Wnt/beta-catenin signaling pathway through suppression of DVL2 autophagy-mediated degradation leading to cell proliferation. The chain is Insulin receptor substrate 1 (IRS1) from Chlorocebus aethiops (Green monkey).